The primary structure comprises 94 residues: Co-chaperonin GroES (94 aa).

This sequence belongs to the GroES chaperonin family. In terms of assembly, heptamer of 7 subunits arranged in a ring. Interacts with the chaperonin GroEL.

It is found in the cytoplasm. Its function is as follows. Together with the chaperonin GroEL, plays an essential role in assisting protein folding. The GroEL-GroES system forms a nano-cage that allows encapsulation of the non-native substrate proteins and provides a physical environment optimized to promote and accelerate protein folding. GroES binds to the apical surface of the GroEL ring, thereby capping the opening of the GroEL channel. The protein is Co-chaperonin GroES of Lactococcus lactis subsp. cremoris (strain MG1363).